Consider the following 150-residue polypeptide: Arginine repressor (150 aa).

It belongs to the ArgR family.

It localises to the cytoplasm. Its pathway is amino-acid biosynthesis; L-arginine biosynthesis [regulation]. Regulates arginine biosynthesis genes. This Clostridium botulinum (strain Eklund 17B / Type B) protein is Arginine repressor.